The primary structure comprises 67 residues: Large ribosomal subunit protein uL29 (67 aa).

The protein belongs to the universal ribosomal protein uL29 family.

This chain is Large ribosomal subunit protein uL29, found in Ehrlichia canis (strain Jake).